The primary structure comprises 155 residues: Deoxyuridine 5'-triphosphate nucleotidohydrolase (155 aa).

Substrate is bound by residues 72–74, N85, 89–91, and K99; these read RSG and TVD.

Belongs to the dUTPase family. Mg(2+) is required as a cofactor.

The catalysed reaction is dUTP + H2O = dUMP + diphosphate + H(+). It functions in the pathway pyrimidine metabolism; dUMP biosynthesis; dUMP from dCTP (dUTP route): step 2/2. In terms of biological role, this enzyme is involved in nucleotide metabolism: it produces dUMP, the immediate precursor of thymidine nucleotides and it decreases the intracellular concentration of dUTP so that uracil cannot be incorporated into DNA. The polypeptide is Deoxyuridine 5'-triphosphate nucleotidohydrolase (Parvibaculum lavamentivorans (strain DS-1 / DSM 13023 / NCIMB 13966)).